A 202-amino-acid polypeptide reads, in one-letter code: Glycerol-3-phosphate acyltransferase (202 aa).

A run of 6 helical transmembrane segments spans residues Ile-2–Val-22, Lys-51–Ala-71, Val-80–Leu-100, Ile-116–Ala-136, Phe-137–Tyr-157, and Val-158–Ile-178.

Belongs to the PlsY family. In terms of assembly, probably interacts with PlsX.

It localises to the cell inner membrane. The catalysed reaction is an acyl phosphate + sn-glycerol 3-phosphate = a 1-acyl-sn-glycero-3-phosphate + phosphate. The protein operates within lipid metabolism; phospholipid metabolism. Functionally, catalyzes the transfer of an acyl group from acyl-phosphate (acyl-PO(4)) to glycerol-3-phosphate (G3P) to form lysophosphatidic acid (LPA). This enzyme utilizes acyl-phosphate as fatty acyl donor, but not acyl-CoA or acyl-ACP. The chain is Glycerol-3-phosphate acyltransferase from Cupriavidus metallidurans (strain ATCC 43123 / DSM 2839 / NBRC 102507 / CH34) (Ralstonia metallidurans).